Here is a 164-residue protein sequence, read N- to C-terminus: E3 ubiquitin ligase complex SCF subunit sconC (164 aa).

Residues 106-164 (ILAANYLDIKALLDVGCKTVANMIKGKSPEEIRKTFNIQNDFTPEEEDQIRRENEWAEE) are interaction with the F-box domain of F-box proteins.

This sequence belongs to the SKP1 family. In terms of assembly, component of the SCF (SKP1-CUL1-F-box protein) E3 ubiquitin ligase complexes.

Its pathway is protein modification; protein ubiquitination. Its function is as follows. Essential component of the SCF (SKP1-CUL1-F-box protein) E3 ubiquitin ligase complexes, which mediate the ubiquitination and subsequent proteasomal degradation of target proteins. Controls sulfur metabolite repression, probably by mediating the inactivation or degradation of the metR transcription factor. This is E3 ubiquitin ligase complex SCF subunit sconC (sconC) from Arthroderma benhamiae (strain ATCC MYA-4681 / CBS 112371) (Trichophyton mentagrophytes).